The sequence spans 483 residues: GTPase Der (483 aa).

EngA-type G domains are found at residues 3–167 (FTLA…GEER) and 212–387 (LRIA…EIWN). GTP contacts are provided by residues 9–16 (GRPNVGKS), 56–60 (DTAGL), 119–122 (NKAE), 218–225 (GRPNAGKS), 265–269 (DTAGM), and 330–333 (NKWD). Residues 388–472 (RRISTGRLNR…PIRLSLRTSD (85 aa)) enclose the KH-like domain.

Belongs to the TRAFAC class TrmE-Era-EngA-EngB-Septin-like GTPase superfamily. EngA (Der) GTPase family. Associates with the 50S ribosomal subunit.

GTPase that plays an essential role in the late steps of ribosome biogenesis. The polypeptide is GTPase Der (Brucella ovis (strain ATCC 25840 / 63/290 / NCTC 10512)).